Consider the following 130-residue polypeptide: Protein lgg-2 (130 aa).

G130 carries Phosphatidylethanolamine amidated glycine lipidation.

It belongs to the ATG8 family. May interact with vps-39. Interacts with lgg-3; the interaction is direct. Interacts with atg-16.1 (via WD domain) and atg-16.2 (via WD 5-6 repeats); the interactions are direct. Interacts with sepa-1 (via the LIR motifs); the interaction is direct. Interacts with sqst-1 (via the LIR motifs); the interaction is direct. Interacts with epg-2 (via the LIR motifs); the interaction is weak. Interacts with atg-7; the interaction is direct. Interacts with atg-3. The interaction with atg-7 and atg-3 may be required for the lipidation of lgg-2. In terms of processing, this protein is subject to lipidation. Lipidation is regulated by lgg-1.

The protein resides in the cytoplasmic vesicle. It is found in the autophagosome. It localises to the cytoplasm. The protein localises to the cell membrane. Its function is as follows. Ubiquitin-like modifier involved in the formation of autophagosomal vacuoles (autophagosomes). When lipidated mediates tethering between adjacent membranes and stimulates membrane fusion. Less effective at promoting membrane fusion than lgg-1. Acts upstream of the autophagy protein epg-5 in the aggrephagy pathway, which is the macroautophagic degradation of ubiquitinated protein aggregates, and preferentially interacts with autophagy proteins and substrates containing LIR motifs to mediate autophagosome formation and protein aggregate degradation. In particular binds to components of an atg-5-lgg-3-atg-16 complex to regulate autophagosome formation and cargo sequestration. Required for the degradation of specific sqst-1-containing aggregates during embryogenesis and the early stages of larval development. Involved in allophagy, which is an autophagic process in which paternal mitochondria and organelles are degraded during fertilization, and moreover is required for the degradation of lgg-1-positive allophagic autophagosomes in embryos. Involved in xenophagy, the autophagy-mediated degradation of pathogens and pathogen products, such as toxins. Also plays a role in membrane-pore repair. Through HOPS complex subunit vps-39, tethers lysosomes with autophagosomes to form autolysosomes. Plays a role in the distribution and clearance of germ cell specific P-granules from somatic cells to ensure exclusive localization of the P-granules in germ cells. Essential for dauer development and life-span extension. The polypeptide is Protein lgg-2 (Caenorhabditis elegans).